The sequence spans 174 residues: Small ribosomal subunit protein uS12m (174 aa).

The protein belongs to the universal ribosomal protein uS12 family. As to quaternary structure, component of the mitochondrial small ribosomal subunit (mt-SSU). Mature N.crassa 74S mitochondrial ribosomes consist of a small (37S) and a large (54S) subunit. The 37S small subunit contains a 16S ribosomal RNA (16S mt-rRNA) and 32 different proteins. The 54S large subunit contains a 23S rRNA (23S mt-rRNA) and 42 different proteins. uS12m forms part of the decoding center of the mt-SSU.

It localises to the mitochondrion. Component of the mitochondrial ribosome (mitoribosome), a dedicated translation machinery responsible for the synthesis of mitochondrial genome-encoded proteins, including at least some of the essential transmembrane subunits of the mitochondrial respiratory chain. The mitoribosomes are attached to the mitochondrial inner membrane and translation products are cotranslationally integrated into the membrane. This Neurospora crassa (strain ATCC 24698 / 74-OR23-1A / CBS 708.71 / DSM 1257 / FGSC 987) protein is Small ribosomal subunit protein uS12m (mrps12).